Here is a 460-residue protein sequence, read N- to C-terminus: MAPPGILNRYLLLMAQEHLEFRLPEIKSLLSLFGGQFISSQETYGKSPFWILSIPSEDIARNLMKRTVCAKSIFELWGHGKCPEELYSSLKNYPVEKMVPFLHSDSTYKIKIHTFNKTLTQEEKVKRIDALEFLPFEGKVNLKKPQHVFSILEDYGLDPNHIPENPHNIYFGRWIADGQRELIESYSVKKRHFIGNTSMDAGLSFIMANHGKVKKNDIVFDPFVGTGGLLIASAHFGAYVYGTDIDYNTVHGLGKASRKNQKWRGPDENIRANLRQYGLEKYYLDVLVSDASKPSWRKGTYFDAIITDPPYGIRESTRRTGSQKEIPKGIEKCPESHVPVSLSYHLSDMFFDLLNFSAETLVLGGRLVYWLPVYTPEYTEEMVPWHPCLKLISNCEQKLSSHTSRRLITMEKVKEFENRDQYSHLLSDHFLLYQGHNSFREKYFSGVTKRIAKEEKSSQE.

Residue alanine 2 is modified to N-acetylalanine.

The protein belongs to the class I-like SAM-binding methyltransferase superfamily. TRM11 methyltransferase family. As to quaternary structure, part of the heterodimeric TRMT11-TRM112 methyltransferase complex; this complex forms an active tRNA methyltransferase, where TRMT112 acts as an activator of the catalytic subunit TRMT11.

It localises to the cytoplasm. It catalyses the reaction guanosine(10) in tRNA + S-adenosyl-L-methionine = N(2)-methylguanosine(10) in tRNA + S-adenosyl-L-homocysteine + H(+). Functionally, catalytic subunit of the TRMT11-TRM112 methyltransferase complex, that specifically mediates the S-adenosyl-L-methionine-dependent N(2)-methylation of guanosine nucleotide at position 10 (m2G10) in tRNAs. This is one of the major tRNA (guanine-N(2))-methyltransferases. The polypeptide is tRNA (guanine(10)-N(2))-methyltransferase TRMT11 (Bos taurus (Bovine)).